Reading from the N-terminus, the 774-residue chain is Phosphoribosylformylglycinamidine synthase subunit PurL (774 aa).

Residue histidine 51 is part of the active site. The ATP site is built by tyrosine 54 and lysine 93. Residue glutamate 95 coordinates Mg(2+). Residues 96-99 (SHNH) and arginine 118 contribute to the substrate site. Histidine 97 functions as the Proton acceptor in the catalytic mechanism. Residue aspartate 119 coordinates Mg(2+). Residue glutamine 242 participates in substrate binding. Residue aspartate 270 participates in Mg(2+) binding. Position 314 to 316 (314 to 316 (ESQ)) interacts with substrate. Residues aspartate 514 and glycine 551 each coordinate ATP. A Mg(2+)-binding site is contributed by asparagine 552. A substrate-binding site is contributed by serine 554.

The protein belongs to the FGAMS family. As to quaternary structure, monomer. Part of the FGAM synthase complex composed of 1 PurL, 1 PurQ and 2 PurS subunits.

The protein resides in the cytoplasm. The catalysed reaction is N(2)-formyl-N(1)-(5-phospho-beta-D-ribosyl)glycinamide + L-glutamine + ATP + H2O = 2-formamido-N(1)-(5-O-phospho-beta-D-ribosyl)acetamidine + L-glutamate + ADP + phosphate + H(+). It functions in the pathway purine metabolism; IMP biosynthesis via de novo pathway; 5-amino-1-(5-phospho-D-ribosyl)imidazole from N(2)-formyl-N(1)-(5-phospho-D-ribosyl)glycinamide: step 1/2. Functionally, part of the phosphoribosylformylglycinamidine synthase complex involved in the purines biosynthetic pathway. Catalyzes the ATP-dependent conversion of formylglycinamide ribonucleotide (FGAR) and glutamine to yield formylglycinamidine ribonucleotide (FGAM) and glutamate. The FGAM synthase complex is composed of three subunits. PurQ produces an ammonia molecule by converting glutamine to glutamate. PurL transfers the ammonia molecule to FGAR to form FGAM in an ATP-dependent manner. PurS interacts with PurQ and PurL and is thought to assist in the transfer of the ammonia molecule from PurQ to PurL. The sequence is that of Phosphoribosylformylglycinamidine synthase subunit PurL from Gloeobacter violaceus (strain ATCC 29082 / PCC 7421).